Here is a 370-residue protein sequence, read N- to C-terminus: Homospermidine synthase 2 (370 aa).

Belongs to the deoxyhypusine synthase family. As to quaternary structure, homotetramer. It depends on NAD(+) as a cofactor. The N-terminus is blocked. As to expression, expressed in roots.

It carries out the reaction putrescine + spermidine = sym-homospermidine + propane-1,3-diamine. The protein operates within alkaloid biosynthesis; pyrrolizidine alkaloid biosynthesis. Its function is as follows. Catalyzes the transfer of an aminobutyl unit from spermidine onto putrescine. The resulting polyamine homospermidine is a precursor in the biosynthesis of pyrrolizidine alkaloids. The protein is Homospermidine synthase 2 of Senecio vernalis (Spring groundsel).